The following is a 360-amino-acid chain: S-adenosylmethionine:tRNA ribosyltransferase-isomerase (360 aa).

This sequence belongs to the QueA family. As to quaternary structure, monomer.

The protein resides in the cytoplasm. It catalyses the reaction 7-aminomethyl-7-carbaguanosine(34) in tRNA + S-adenosyl-L-methionine = epoxyqueuosine(34) in tRNA + adenine + L-methionine + 2 H(+). Its pathway is tRNA modification; tRNA-queuosine biosynthesis. Transfers and isomerizes the ribose moiety from AdoMet to the 7-aminomethyl group of 7-deazaguanine (preQ1-tRNA) to give epoxyqueuosine (oQ-tRNA). This is S-adenosylmethionine:tRNA ribosyltransferase-isomerase from Rhizobium rhizogenes (strain K84 / ATCC BAA-868) (Agrobacterium radiobacter).